The sequence spans 392 residues: Succinate--CoA ligase [ADP-forming] subunit beta (392 aa).

Residues 9–248 (KEILRGFGVT…TSEEDPLEVE (240 aa)) enclose the ATP-grasp domain. Residues lysine 50, 57–59 (GRG), glutamate 103, methionine 106, and glutamate 111 contribute to the ATP site. The Mg(2+) site is built by asparagine 203 and aspartate 217. Substrate is bound by residues asparagine 268 and 325–327 (GIV).

This sequence belongs to the succinate/malate CoA ligase beta subunit family. Heterotetramer of two alpha and two beta subunits. The cofactor is Mg(2+).

It carries out the reaction succinate + ATP + CoA = succinyl-CoA + ADP + phosphate. The enzyme catalyses GTP + succinate + CoA = succinyl-CoA + GDP + phosphate. Its pathway is carbohydrate metabolism; tricarboxylic acid cycle; succinate from succinyl-CoA (ligase route): step 1/1. Functionally, succinyl-CoA synthetase functions in the citric acid cycle (TCA), coupling the hydrolysis of succinyl-CoA to the synthesis of either ATP or GTP and thus represents the only step of substrate-level phosphorylation in the TCA. The beta subunit provides nucleotide specificity of the enzyme and binds the substrate succinate, while the binding sites for coenzyme A and phosphate are found in the alpha subunit. This is Succinate--CoA ligase [ADP-forming] subunit beta from Chloroherpeton thalassium (strain ATCC 35110 / GB-78).